Consider the following 212-residue polypeptide: Thymidylate kinase (212 aa).

10–17 contributes to the ATP binding site; the sequence is GIDGCGKT.

The protein belongs to the thymidylate kinase family.

The enzyme catalyses dTMP + ATP = dTDP + ADP. In terms of biological role, phosphorylation of dTMP to form dTDP in both de novo and salvage pathways of dTTP synthesis. In Prochlorococcus marinus (strain AS9601), this protein is Thymidylate kinase.